The chain runs to 130 residues: Blasticidin-S deaminase (130 aa).

The region spanning 1–129 (MPLSQEESTL…ELLPSGYMNR (129 aa)) is the CMP/dCMP-type deaminase domain. Ser28 is a substrate binding site. Cys54 lines the Zn(2+) pocket. The active-site Proton donor is the Glu56. Arg82 contacts substrate. Positions 88 and 91 each coordinate Zn(2+). Tyr126 is a binding site for substrate.

Belongs to the cytidine and deoxycytidylate deaminase family. Homotetramer. Zn(2+) serves as cofactor.

It carries out the reaction blasticidin S + H2O + H(+) = deaminohydroxyblasticidin S + NH4(+). Functionally, catalyzes the deamination of the cytosine moiety of the antibiotics blasticidin S, cytomycin and acetylblasticidin S. This is Blasticidin-S deaminase (bsd) from Aspergillus terreus (strain NIH 2624 / FGSC A1156).